The sequence spans 78 residues: Large ribosomal subunit protein uL10 (78 aa).

Residues 40-50 (AAAAAATAPAA) show a composition bias toward low complexity. The interval 40 to 78 (AAAAAATAPAAETKKEEKKEEKKEETEESDDDIGLSLFH) is disordered. The span at 51–64 (ETKKEEKKEEKKEE) shows a compositional bias: basic and acidic residues.

It belongs to the universal ribosomal protein uL10 family. As to quaternary structure, P0 forms a pentameric complex by interaction with dimers of P1 and P2.

Its subcellular location is the nucleus. It is found in the cytoplasm. Ribosomal protein P0 is the functional equivalent of E.coli protein L10. The chain is Large ribosomal subunit protein uL10 from Culicoides nubeculosus (Biting midge).